Consider the following 173-residue polypeptide: Co-chaperone protein HscB (173 aa).

The region spanning 2–74 (DYFTLFGLPA…LKRAEYMLSL (73 aa)) is the J domain.

Belongs to the HscB family. As to quaternary structure, interacts with HscA and stimulates its ATPase activity. Interacts with IscU.

In terms of biological role, co-chaperone involved in the maturation of iron-sulfur cluster-containing proteins. Seems to help targeting proteins to be folded toward HscA. This is Co-chaperone protein HscB from Photorhabdus laumondii subsp. laumondii (strain DSM 15139 / CIP 105565 / TT01) (Photorhabdus luminescens subsp. laumondii).